Reading from the N-terminus, the 520-residue chain is 2-isopropylmalate synthase (520 aa).

The 263-residue stretch at 12-274 folds into the Pyruvate carboxyltransferase domain; it reads IRIFDTTLRD…DSAINTPRIV (263 aa). Mn(2+) contacts are provided by D21, H209, H211, and N245. Residues 396 to 520 form a regulatory domain region; sequence RLASMTISDV…VIAGKTAAVA (125 aa).

Belongs to the alpha-IPM synthase/homocitrate synthase family. LeuA type 1 subfamily. Homodimer. The cofactor is Mn(2+).

The protein resides in the cytoplasm. The enzyme catalyses 3-methyl-2-oxobutanoate + acetyl-CoA + H2O = (2S)-2-isopropylmalate + CoA + H(+). It participates in amino-acid biosynthesis; L-leucine biosynthesis; L-leucine from 3-methyl-2-oxobutanoate: step 1/4. Its function is as follows. Catalyzes the condensation of the acetyl group of acetyl-CoA with 3-methyl-2-oxobutanoate (2-ketoisovalerate) to form 3-carboxy-3-hydroxy-4-methylpentanoate (2-isopropylmalate). This is 2-isopropylmalate synthase from Xanthomonas oryzae pv. oryzae (strain MAFF 311018).